We begin with the raw amino-acid sequence, 357 residues long: UPF0283 membrane protein HS_0596 (357 aa).

A run of 3 helical transmembrane segments spans residues leucine 67–valine 87, isoleucine 96–isoleucine 116, and alanine 213–isoleucine 233.

It belongs to the UPF0283 family.

The protein localises to the cell inner membrane. In Histophilus somni (strain 129Pt) (Haemophilus somnus), this protein is UPF0283 membrane protein HS_0596.